Consider the following 174-residue polypeptide: Shikimate kinase (174 aa).

14-19 (GAGKST) is an ATP binding site. S18 serves as a coordination point for Mg(2+). 3 residues coordinate substrate: D36, R60, and G82. R120 provides a ligand contact to ATP. R141 lines the substrate pocket. Residue R158 participates in ATP binding.

The protein belongs to the shikimate kinase family. Monomer. The cofactor is Mg(2+).

It is found in the cytoplasm. It catalyses the reaction shikimate + ATP = 3-phosphoshikimate + ADP + H(+). It participates in metabolic intermediate biosynthesis; chorismate biosynthesis; chorismate from D-erythrose 4-phosphate and phosphoenolpyruvate: step 5/7. Catalyzes the specific phosphorylation of the 3-hydroxyl group of shikimic acid using ATP as a cosubstrate. The polypeptide is Shikimate kinase (Buchnera aphidicola subsp. Baizongia pistaciae (strain Bp)).